The chain runs to 354 residues: Cytoplasmic tRNA 2-thiolation protein 1 (354 aa).

The protein belongs to the TtcA family. CTU1/NCS6/ATPBD3 subfamily.

The protein localises to the cytoplasm. The protein operates within tRNA modification; 5-methoxycarbonylmethyl-2-thiouridine-tRNA biosynthesis. Plays a central role in 2-thiolation of mcm(5)S(2)U at tRNA wobble positions of tRNA(Lys), tRNA(Glu) and tRNA(Gln). Directly binds tRNAs and probably acts by catalyzing adenylation of tRNAs, an intermediate required for 2-thiolation. It is unclear whether it acts as a sulfurtransferase that transfers sulfur from thiocarboxylated URM1 onto the uridine of tRNAs at wobble position. Prior mcm(5) tRNA modification by the elongator complex is required for 2-thiolation. May also be involved in protein urmylation. The protein is Cytoplasmic tRNA 2-thiolation protein 1 of Laccaria bicolor (strain S238N-H82 / ATCC MYA-4686) (Bicoloured deceiver).